The following is a 441-amino-acid chain: Ribulose bisphosphate carboxylase large chain (441 aa).

Lysine 5 is subject to N6,N6,N6-trimethyllysine. Residues asparagine 114 and threonine 164 each contribute to the substrate site. The active-site Proton acceptor is the lysine 166. Residue lysine 168 participates in substrate binding. 3 residues coordinate Mg(2+): lysine 192, aspartate 194, and glutamate 195. Lysine 192 is subject to N6-carboxylysine. The Proton acceptor role is filled by histidine 285. The substrate site is built by arginine 286, histidine 318, and serine 370.

Belongs to the RuBisCO large chain family. Type I subfamily. In terms of assembly, heterohexadecamer of 8 large chains and 8 small chains; disulfide-linked. The disulfide link is formed within the large subunit homodimers. It depends on Mg(2+) as a cofactor. Post-translationally, the disulfide bond which can form in the large chain dimeric partners within the hexadecamer appears to be associated with oxidative stress and protein turnover.

It is found in the plastid. The protein resides in the chloroplast. The catalysed reaction is 2 (2R)-3-phosphoglycerate + 2 H(+) = D-ribulose 1,5-bisphosphate + CO2 + H2O. The enzyme catalyses D-ribulose 1,5-bisphosphate + O2 = 2-phosphoglycolate + (2R)-3-phosphoglycerate + 2 H(+). RuBisCO catalyzes two reactions: the carboxylation of D-ribulose 1,5-bisphosphate, the primary event in carbon dioxide fixation, as well as the oxidative fragmentation of the pentose substrate in the photorespiration process. Both reactions occur simultaneously and in competition at the same active site. In Pellaea rotundifolia (Button fern), this protein is Ribulose bisphosphate carboxylase large chain.